A 332-amino-acid polypeptide reads, in one-letter code: Glyceraldehyde-3-phosphate dehydrogenase (332 aa).

NAD(+)-binding positions include 10-11 (RI), aspartate 32, and methionine 77. D-glyceraldehyde 3-phosphate is bound by residues 148-150 (SCT), threonine 179, 208-209 (TG), and arginine 231. Catalysis depends on cysteine 149, which acts as the Nucleophile. Residue asparagine 313 participates in NAD(+) binding.

This sequence belongs to the glyceraldehyde-3-phosphate dehydrogenase family. Homotetramer.

The protein localises to the cytoplasm. The enzyme catalyses D-glyceraldehyde 3-phosphate + phosphate + NAD(+) = (2R)-3-phospho-glyceroyl phosphate + NADH + H(+). Its pathway is carbohydrate degradation; glycolysis; pyruvate from D-glyceraldehyde 3-phosphate: step 1/5. This Phytophthora infestans (Potato late blight agent) protein is Glyceraldehyde-3-phosphate dehydrogenase (GPDA).